The primary structure comprises 332 residues: Ferredoxin--NADP reductase (332 aa).

FAD-binding residues include D33, Q41, Y46, A86, F120, D286, and T327.

The protein belongs to the ferredoxin--NADP reductase type 2 family. Homodimer. It depends on FAD as a cofactor.

It catalyses the reaction 2 reduced [2Fe-2S]-[ferredoxin] + NADP(+) + H(+) = 2 oxidized [2Fe-2S]-[ferredoxin] + NADPH. The polypeptide is Ferredoxin--NADP reductase (Rickettsia bellii (strain OSU 85-389)).